The chain runs to 242 residues: Ribose-5-phosphate isomerase A (242 aa).

Substrate contacts are provided by residues 39–42, 95–98, and 108–111; these read SGST, DGAD, and KGGG. Glu117 acts as the Proton acceptor in catalysis. Lys135 contributes to the substrate binding site.

This sequence belongs to the ribose 5-phosphate isomerase family. As to quaternary structure, homodimer.

The enzyme catalyses aldehydo-D-ribose 5-phosphate = D-ribulose 5-phosphate. It participates in carbohydrate degradation; pentose phosphate pathway; D-ribose 5-phosphate from D-ribulose 5-phosphate (non-oxidative stage): step 1/1. In terms of biological role, catalyzes the reversible conversion of ribose-5-phosphate to ribulose 5-phosphate. This is Ribose-5-phosphate isomerase A from Chlamydia trachomatis serovar L2 (strain ATCC VR-902B / DSM 19102 / 434/Bu).